A 332-amino-acid chain; its full sequence is Small ribosomal subunit protein uS2 (332 aa).

This sequence belongs to the universal ribosomal protein uS2 family.

The chain is Small ribosomal subunit protein uS2 from Nitrobacter hamburgensis (strain DSM 10229 / NCIMB 13809 / X14).